Here is a 610-residue protein sequence, read N- to C-terminus: Glutamine--fructose-6-phosphate aminotransferase [isomerizing] (610 aa).

Catalysis depends on Cys2, which acts as the Nucleophile; for GATase activity. Positions Cys2–Arg218 constitute a Glutamine amidotransferase type-2 domain. SIS domains are found at residues Ala286–Arg426 and Leu459–Pro600. Residue Lys605 is the For Fru-6P isomerization activity of the active site.

As to quaternary structure, homodimer.

It is found in the cytoplasm. It carries out the reaction D-fructose 6-phosphate + L-glutamine = D-glucosamine 6-phosphate + L-glutamate. Catalyzes the first step in hexosamine metabolism, converting fructose-6P into glucosamine-6P using glutamine as a nitrogen source. In Vibrio vulnificus (strain YJ016), this protein is Glutamine--fructose-6-phosphate aminotransferase [isomerizing].